The following is a 72-amino-acid chain: Translation initiation factor IF-1 (72 aa).

An S1-like domain is found at 1–72 (MAKSDVIEME…SKGRIVYRAR (72 aa)).

This sequence belongs to the IF-1 family. As to quaternary structure, component of the 30S ribosomal translation pre-initiation complex which assembles on the 30S ribosome in the order IF-2 and IF-3, IF-1 and N-formylmethionyl-tRNA(fMet); mRNA recruitment can occur at any time during PIC assembly.

It is found in the cytoplasm. Its function is as follows. One of the essential components for the initiation of protein synthesis. Stabilizes the binding of IF-2 and IF-3 on the 30S subunit to which N-formylmethionyl-tRNA(fMet) subsequently binds. Helps modulate mRNA selection, yielding the 30S pre-initiation complex (PIC). Upon addition of the 50S ribosomal subunit IF-1, IF-2 and IF-3 are released leaving the mature 70S translation initiation complex. In Marinobacter nauticus (strain ATCC 700491 / DSM 11845 / VT8) (Marinobacter aquaeolei), this protein is Translation initiation factor IF-1.